We begin with the raw amino-acid sequence, 468 residues long: Hydroxymethylglutaryl-CoA synthase B (468 aa).

Glutamate 85 functions as the Proton donor/acceptor in the catalytic mechanism. Residue cysteine 119 is the Acyl-thioester intermediate of the active site. Positions 119, 161, 211, 250, 259, 327, and 359 each coordinate (3S)-3-hydroxy-3-methylglutaryl-CoA. The active-site Proton donor/acceptor is the histidine 250.

It belongs to the thiolase-like superfamily. HMG-CoA synthase family.

It catalyses the reaction acetoacetyl-CoA + acetyl-CoA + H2O = (3S)-3-hydroxy-3-methylglutaryl-CoA + CoA + H(+). Its pathway is metabolic intermediate biosynthesis; (R)-mevalonate biosynthesis; (R)-mevalonate from acetyl-CoA: step 2/3. In terms of biological role, condenses acetyl-CoA with acetoacetyl-CoA to form HMG-CoA, which is the substrate for HMG-CoA reductase. The chain is Hydroxymethylglutaryl-CoA synthase B (hgsB) from Dictyostelium discoideum (Social amoeba).